Consider the following 491-residue polypeptide: Serine hydroxymethyltransferase (491 aa).

(6S)-5,6,7,8-tetrahydrofolate is bound by residues Leu-173 and 177-179 (GHL). An N6-(pyridoxal phosphate)lysine modification is found at Lys-285.

The protein belongs to the SHMT family. As to quaternary structure, homodimer. It depends on pyridoxal 5'-phosphate as a cofactor.

The protein resides in the cytoplasm. It carries out the reaction (6R)-5,10-methylene-5,6,7,8-tetrahydrofolate + glycine + H2O = (6S)-5,6,7,8-tetrahydrofolate + L-serine. It participates in one-carbon metabolism; tetrahydrofolate interconversion. The protein operates within amino-acid biosynthesis; glycine biosynthesis; glycine from L-serine: step 1/1. Functionally, catalyzes the reversible interconversion of serine and glycine with tetrahydrofolate (THF) serving as the one-carbon carrier. This reaction serves as the major source of one-carbon groups required for the biosynthesis of purines, thymidylate, methionine, and other important biomolecules. Also exhibits THF-independent aldolase activity toward beta-hydroxyamino acids, producing glycine and aldehydes, via a retro-aldol mechanism. This Cutibacterium acnes (strain DSM 16379 / KPA171202) (Propionibacterium acnes) protein is Serine hydroxymethyltransferase.